We begin with the raw amino-acid sequence, 311 residues long: Mas-related G-protein coupled receptor member E (311 aa).

Over methionine 1–valine 25 the chain is Extracellular. Residues isoleucine 26–tryptophan 46 form a helical membrane-spanning segment. The Cytoplasmic portion of the chain corresponds to leucine 47–aspartate 63. Residues valine 64–leucine 84 form a helical membrane-spanning segment. Residues glutamine 85 to glutamine 95 lie on the Extracellular side of the membrane. A helical transmembrane segment spans residues threonine 96–valine 116. The Cytoplasmic portion of the chain corresponds to serine 117–arginine 136. A helical membrane pass occupies residues histidine 137–leucine 157. Residues serine 158 to tryptophan 177 lie on the Extracellular side of the membrane. A helical transmembrane segment spans residues leucine 178–leucine 198. Over leucine 199–threonine 216 the chain is Cytoplasmic. Residues leucine 217–leucine 237 traverse the membrane as a helical segment. The Extracellular segment spans residues serine 238 to histidine 251. A helical transmembrane segment spans residues phenylalanine 252 to glycine 272. Residues serine 273 to alanine 311 lie on the Cytoplasmic side of the membrane.

Belongs to the G-protein coupled receptor 1 family. Mas subfamily.

It localises to the cell membrane. In terms of biological role, orphan receptor. May regulate nociceptor function and/or development, including the sensation or modulation of pain. In Macaca fascicularis (Crab-eating macaque), this protein is Mas-related G-protein coupled receptor member E (MRGPRE).